A 165-amino-acid polypeptide reads, in one-letter code: Large ribosomal subunit protein uL10 (165 aa).

It belongs to the universal ribosomal protein uL10 family. In terms of assembly, part of the ribosomal stalk of the 50S ribosomal subunit. The N-terminus interacts with L11 and the large rRNA to form the base of the stalk. The C-terminus forms an elongated spine to which L12 dimers bind in a sequential fashion forming a multimeric L10(L12)X complex.

Functionally, forms part of the ribosomal stalk, playing a central role in the interaction of the ribosome with GTP-bound translation factors. This chain is Large ribosomal subunit protein uL10, found in Burkholderia multivorans (strain ATCC 17616 / 249).